A 162-amino-acid polypeptide reads, in one-letter code: uncharacterized protein (162 aa).

This sequence belongs to the baculoviridae 19 kDa protein family.

This is an uncharacterized protein from Tortricidae (ClGV).